The following is a 388-amino-acid chain: Protein kes1 (388 aa).

The protein belongs to the OSBP family.

Its function is as follows. Lipid transporter involved in lipid countertransport between the Golgi complex and membranes of the endoplasmic reticulum: specifically exchanges sterol with phosphatidylinositol 4-phosphate (PI4P), delivering sterol to the Golgi in exchange for PI4P, which is degraded by the SAC1 phosphatase in the endoplasmic reticulum. The polypeptide is Protein kes1 (kes1) (Schizosaccharomyces pombe (strain 972 / ATCC 24843) (Fission yeast)).